Here is a 163-residue protein sequence, read N- to C-terminus: Ankyrin repeat domain-containing protein 37 (163 aa).

ANK repeat units lie at residues 29-58 (LGQS…DVNQ), 62-91 (FGEA…RIDM), and 95-124 (DGHT…TQDT). The Nuclear localization signal signature appears at 129–149 (QSSLHNLKETAAGVKRGQCCQ).

Its subcellular location is the nucleus. The protein resides in the cytoplasm. The polypeptide is Ankyrin repeat domain-containing protein 37 (ankrd37) (Xenopus tropicalis (Western clawed frog)).